Consider the following 704-residue polypeptide: Elongation factor G (704 aa).

In terms of domain architecture, tr-type G spans 8 to 290; sequence EKYRNIGICA…GVVRYLPAPN (283 aa). Residues 17 to 24, 88 to 92, and 142 to 145 each bind GTP; these read AHVDAGKT, DTPGH, and NKMD.

Belongs to the TRAFAC class translation factor GTPase superfamily. Classic translation factor GTPase family. EF-G/EF-2 subfamily.

Its subcellular location is the cytoplasm. Catalyzes the GTP-dependent ribosomal translocation step during translation elongation. During this step, the ribosome changes from the pre-translocational (PRE) to the post-translocational (POST) state as the newly formed A-site-bound peptidyl-tRNA and P-site-bound deacylated tRNA move to the P and E sites, respectively. Catalyzes the coordinated movement of the two tRNA molecules, the mRNA and conformational changes in the ribosome. This Francisella tularensis subsp. holarctica (strain LVS) protein is Elongation factor G.